A 341-amino-acid chain; its full sequence is N-acetyl-gamma-glutamyl-phosphate reductase (341 aa).

The active site involves Cys147.

Belongs to the NAGSA dehydrogenase family. Type 1 subfamily.

The protein localises to the cytoplasm. The enzyme catalyses N-acetyl-L-glutamate 5-semialdehyde + phosphate + NADP(+) = N-acetyl-L-glutamyl 5-phosphate + NADPH + H(+). It functions in the pathway amino-acid biosynthesis; L-arginine biosynthesis; N(2)-acetyl-L-ornithine from L-glutamate: step 3/4. Functionally, catalyzes the NADPH-dependent reduction of N-acetyl-5-glutamyl phosphate to yield N-acetyl-L-glutamate 5-semialdehyde. In Dehalococcoides mccartyi (strain ATCC BAA-2266 / KCTC 15142 / 195) (Dehalococcoides ethenogenes (strain 195)), this protein is N-acetyl-gamma-glutamyl-phosphate reductase.